Consider the following 38-residue polypeptide: Photosystem II reaction center protein L (38 aa).

Residues 17–37 (SLYWGLLCIFVLAILFSSYFF) traverse the membrane as a helical segment.

Belongs to the PsbL family. PSII is composed of 1 copy each of membrane proteins PsbA, PsbB, PsbC, PsbD, PsbE, PsbF, PsbH, PsbI, PsbJ, PsbK, PsbL, PsbM, PsbT, PsbX, PsbY, PsbZ, Psb30/Ycf12, at least 3 peripheral proteins of the oxygen-evolving complex and a large number of cofactors. It forms dimeric complexes.

The protein resides in the plastid. The protein localises to the chloroplast thylakoid membrane. Functionally, one of the components of the core complex of photosystem II (PSII). PSII is a light-driven water:plastoquinone oxidoreductase that uses light energy to abstract electrons from H(2)O, generating O(2) and a proton gradient subsequently used for ATP formation. It consists of a core antenna complex that captures photons, and an electron transfer chain that converts photonic excitation into a charge separation. This subunit is found at the monomer-monomer interface and is required for correct PSII assembly and/or dimerization. In Cyanidioschyzon merolae (strain NIES-3377 / 10D) (Unicellular red alga), this protein is Photosystem II reaction center protein L.